A 388-amino-acid polypeptide reads, in one-letter code: Probable ubiquitin-conjugating enzyme E2 L709 (388 aa).

One can recognise a UBC core domain in the interval 3 to 162 (NVHKRVIKDI…GNDLMVQKLF (160 aa)). Cys95 functions as the Glycyl thioester intermediate in the catalytic mechanism. The segment at 195–388 (VEEKSAKTSK…SSKSSKTGKK (194 aa)) is disordered. Composition is skewed to acidic residues over residues 221–238 (SEEEENSDDDNTDSDSES) and 246–297 (DVVD…ESEE). Low complexity predominate over residues 310 to 388 (KTTTKSSSTK…SSKSSKTGKK (79 aa)).

Belongs to the ubiquitin-conjugating enzyme family.

The catalysed reaction is S-ubiquitinyl-[E1 ubiquitin-activating enzyme]-L-cysteine + [E2 ubiquitin-conjugating enzyme]-L-cysteine = [E1 ubiquitin-activating enzyme]-L-cysteine + S-ubiquitinyl-[E2 ubiquitin-conjugating enzyme]-L-cysteine.. Its pathway is protein modification; protein ubiquitination. Catalyzes the covalent attachment of ubiquitin to other proteins. In Acanthamoeba polyphaga (Amoeba), this protein is Probable ubiquitin-conjugating enzyme E2 L709.